Here is an 89-residue protein sequence, read N- to C-terminus: Defensin-like protein 103 (89 aa).

The signal sequence occupies residues 1–24; sequence MAITRKNLVAFCFTILFIISSIHC. Cystine bridges form between Cys-46-Cys-84, Cys-52-Cys-75, Cys-61-Cys-82, and Cys-65-Cys-83.

It belongs to the DEFL family.

It localises to the secreted. This Arabidopsis thaliana (Mouse-ear cress) protein is Defensin-like protein 103.